The following is a 369-amino-acid chain: D-glucosaminate-6-phosphate ammonia lyase (369 aa).

N6-(pyridoxal phosphate)lysine is present on Lys213.

This sequence belongs to the SelA family. It depends on pyridoxal 5'-phosphate as a cofactor.

The enzyme catalyses 2-amino-2-deoxy-D-gluconate 6-phosphate = 2-dehydro-3-deoxy-6-phospho-D-gluconate + NH4(+). Functionally, involved in the catabolism of D-glucosaminate. Catalyzes the conversion of D-glucosaminate 6-phosphate to yield keto-3-deoxygluconate 6-phosphate (KDGP). The sequence is that of D-glucosaminate-6-phosphate ammonia lyase from Salmonella typhimurium (strain 14028s / SGSC 2262).